Reading from the N-terminus, the 525-residue chain is Glutamyl-tRNA(Gln) amidotransferase subunit A, mitochondrial (525 aa).

Catalysis depends on charge relay system residues K76 and S168. The Acyl-ester intermediate role is filled by S192.

The protein belongs to the amidase family. GatA subfamily. As to quaternary structure, subunit of the heterotrimeric GatCAB amidotransferase (AdT) complex, composed of A (QRSL1), B (GATB) and C (GATC) subunits.

The protein resides in the mitochondrion. The catalysed reaction is L-glutamyl-tRNA(Gln) + L-glutamine + ATP + H2O = L-glutaminyl-tRNA(Gln) + L-glutamate + ADP + phosphate + H(+). Allows the formation of correctly charged Gln-tRNA(Gln) through the transamidation of misacylated Glu-tRNA(Gln) in the mitochondria. The reaction takes place in the presence of glutamine and ATP through an activated gamma-phospho-Glu-tRNA(Gln). The protein is Glutamyl-tRNA(Gln) amidotransferase subunit A, mitochondrial (Qrsl1) of Mus musculus (Mouse).